A 178-amino-acid chain; its full sequence is MNKKTQALIEQYSKSLVEVAIEHKIVEKIQQEVAALIDIFETSELEGVLSSLAVSHDEKQHFVKTLQTSCSTYLVNFLEVIVQNEREALLYPILKSIDQELIKVNGQYPIQITTAVALSPEQKERLFDIAKTKLALPNGQLVEHIDPSIVGGFVVNANNKVIDASVRNQLHQFKMKLK.

The protein belongs to the ATPase delta chain family. F-type ATPases have 2 components, F(1) - the catalytic core - and F(0) - the membrane proton channel. F(1) has five subunits: alpha(3), beta(3), gamma(1), delta(1), epsilon(1). F(0) has three main subunits: a(1), b(2) and c(10-14). The alpha and beta chains form an alternating ring which encloses part of the gamma chain. F(1) is attached to F(0) by a central stalk formed by the gamma and epsilon chains, while a peripheral stalk is formed by the delta and b chains.

The protein resides in the cell membrane. In terms of biological role, f(1)F(0) ATP synthase produces ATP from ADP in the presence of a proton or sodium gradient. F-type ATPases consist of two structural domains, F(1) containing the extramembraneous catalytic core and F(0) containing the membrane proton channel, linked together by a central stalk and a peripheral stalk. During catalysis, ATP synthesis in the catalytic domain of F(1) is coupled via a rotary mechanism of the central stalk subunits to proton translocation. Functionally, this protein is part of the stalk that links CF(0) to CF(1). It either transmits conformational changes from CF(0) to CF(1) or is implicated in proton conduction. The sequence is that of ATP synthase subunit delta from Streptococcus agalactiae serotype Ia (strain ATCC 27591 / A909 / CDC SS700).